The following is a 181-amino-acid chain: Ribonuclease HII (181 aa).

In terms of domain architecture, RNase H type-2 spans 1–181 (MICGIDEVGR…SLHRKSFQLI (181 aa)). Positions 6, 7, and 98 each coordinate a divalent metal cation.

The protein belongs to the RNase HII family. Requires Mn(2+) as cofactor. Mg(2+) is required as a cofactor.

It localises to the cytoplasm. It carries out the reaction Endonucleolytic cleavage to 5'-phosphomonoester.. In terms of biological role, endonuclease that specifically degrades the RNA of RNA-DNA hybrids. The polypeptide is Ribonuclease HII (Borrelia duttonii (strain Ly)).